The sequence spans 374 residues: Isocitrate dehydrogenase [NAD] catalytic subunit 6, mitochondrial (374 aa).

Residues 1–44 (MTMTAFLARRLIGNGSSQILGTSSSSSGPFISVSRAFFSSSTPI) constitute a mitochondrion transit peptide. Substrate contacts are provided by R127, R137, R158, and D245. Mg(2+)-binding residues include D245, D269, and D273.

It belongs to the isocitrate and isopropylmalate dehydrogenases family. As to quaternary structure, heterooligomer of catalytic and regulatory subunits. Mg(2+) is required as a cofactor. It depends on Mn(2+) as a cofactor. As to expression, ubiquitous. Predominantly expressed in leaves.

It localises to the mitochondrion. It catalyses the reaction D-threo-isocitrate + NAD(+) = 2-oxoglutarate + CO2 + NADH. In terms of biological role, catalytic subunit of the NAD(+)-dependent isocitrate dehydrogenase involved in the oxidative decarboxylation of isocitrate to 2-oxoglutarate. Performs an essential role in the oxidative function of the citric acid cycle. In Arabidopsis thaliana (Mouse-ear cress), this protein is Isocitrate dehydrogenase [NAD] catalytic subunit 6, mitochondrial (IDH6).